Reading from the N-terminus, the 385-residue chain is 1-deoxy-D-xylulose 5-phosphate reductoisomerase (385 aa).

Positions 10, 11, 12, 13, 37, and 124 each coordinate NADPH. Lys-125 is a binding site for 1-deoxy-D-xylulose 5-phosphate. Glu-126 is a binding site for NADPH. Asp-150 lines the Mn(2+) pocket. 1-deoxy-D-xylulose 5-phosphate-binding residues include Ser-151, Glu-152, Ser-176, and His-199. Position 152 (Glu-152) interacts with Mn(2+). Gly-205 contributes to the NADPH binding site. Positions 212, 217, 218, and 221 each coordinate 1-deoxy-D-xylulose 5-phosphate. Glu-221 provides a ligand contact to Mn(2+).

Belongs to the DXR family. Mg(2+) is required as a cofactor. The cofactor is Mn(2+).

It carries out the reaction 2-C-methyl-D-erythritol 4-phosphate + NADP(+) = 1-deoxy-D-xylulose 5-phosphate + NADPH + H(+). Its pathway is isoprenoid biosynthesis; isopentenyl diphosphate biosynthesis via DXP pathway; isopentenyl diphosphate from 1-deoxy-D-xylulose 5-phosphate: step 1/6. Functionally, catalyzes the NADPH-dependent rearrangement and reduction of 1-deoxy-D-xylulose-5-phosphate (DXP) to 2-C-methyl-D-erythritol 4-phosphate (MEP). The protein is 1-deoxy-D-xylulose 5-phosphate reductoisomerase of Clostridium botulinum (strain Loch Maree / Type A3).